A 1217-amino-acid chain; its full sequence is Sterol 3-beta-glucosyltransferase (1217 aa).

One can recognise a GRAM 1 domain in the interval 195–232 (EFVRKYFGISEEETLIGHYTGWLLQEVLIQGNLFITNS). The region spanning 246–343 (AVVLCGKLKL…WVKCLKKQLF (98 aa)) is the PH domain. One can recognise a GRAM 2 domain in the interval 590 to 656 (AKIKDWFNLH…EDIEGYNEIL (67 aa)). The UDP-alpha-D-glucose site is built by Ser766, Arg767, Asp769, Asn1042, Ile1072, His1074, His1087, Ser1090, Gly1091, Thr1092, Asp1111, and Gln1112.

It belongs to the glycosyltransferase 28 family.

It localises to the cytoplasm. The protein resides in the membrane. It catalyses the reaction a sterol + UDP-alpha-D-glucose = a sterol 3-beta-D-glucoside + UDP + H(+). It carries out the reaction ergosterol + UDP-alpha-D-glucose = ergosteryl 3-beta-D-glucoside + UDP + H(+). Sterol glycosyltransferase responsible for the glycosylation of ergosterol to form ergosterol-glucoside. This Vanderwaltozyma polyspora (strain ATCC 22028 / DSM 70294 / BCRC 21397 / CBS 2163 / NBRC 10782 / NRRL Y-8283 / UCD 57-17) (Kluyveromyces polysporus) protein is Sterol 3-beta-glucosyltransferase.